The primary structure comprises 339 residues: Phenylalanine--tRNA ligase alpha subunit (339 aa).

A Mg(2+)-binding site is contributed by Glu254.

The protein belongs to the class-II aminoacyl-tRNA synthetase family. Phe-tRNA synthetase alpha subunit type 1 subfamily. As to quaternary structure, tetramer of two alpha and two beta subunits. Mg(2+) is required as a cofactor.

The protein resides in the cytoplasm. It catalyses the reaction tRNA(Phe) + L-phenylalanine + ATP = L-phenylalanyl-tRNA(Phe) + AMP + diphosphate + H(+). The protein is Phenylalanine--tRNA ligase alpha subunit of Clostridium botulinum (strain Alaska E43 / Type E3).